The following is a 520-amino-acid chain: Nucleolar protein 12 (520 aa).

Disordered regions lie at residues 1 to 29 (MGKK…NVSV) and 41 to 185 (AGPV…DDDE). Residues 78-95 (ASEDQFMEDAPESPDAAE) show a composition bias toward acidic residues. The segment covering 120–132 (SYMRRLAKEEQKE) has biased composition (basic and acidic residues). Positions 144 to 168 (LEEESEDGEKESPQSEDGESEDEGA) are enriched in acidic residues. RRM domains are found at residues 191–303 (RTVF…NVAH) and 311–421 (RCVF…RAKK). The segment at 472-520 (EGNRATADGSSRIRVRTKSRGSKAKKDSRSKKRAAAYKAAGGKKAKIGK) is disordered. The segment covering 484-520 (IRVRTKSRGSKAKKDSRSKKRAAAYKAAGGKKAKIGK) has biased composition (basic residues).

It belongs to the RRM RBM34 family.

The protein localises to the nucleus. The protein resides in the nucleolus. Involved in pre-25S rRNA processing. The sequence is that of Nucleolar protein 12 (nop12) from Emericella nidulans (strain FGSC A4 / ATCC 38163 / CBS 112.46 / NRRL 194 / M139) (Aspergillus nidulans).